A 217-amino-acid polypeptide reads, in one-letter code: Urease accessory protein UreF (217 aa).

It belongs to the UreF family. As to quaternary structure, ureD, UreF and UreG form a complex that acts as a GTP-hydrolysis-dependent molecular chaperone, activating the urease apoprotein by helping to assemble the nickel containing metallocenter of UreC. The UreE protein probably delivers the nickel.

It localises to the cytoplasm. In terms of biological role, required for maturation of urease via the functional incorporation of the urease nickel metallocenter. The chain is Urease accessory protein UreF from Ruegeria pomeroyi (strain ATCC 700808 / DSM 15171 / DSS-3) (Silicibacter pomeroyi).